The primary structure comprises 162 residues: Protein NrdI (162 aa).

This sequence belongs to the NrdI family.

In terms of biological role, probably involved in ribonucleotide reductase function. The protein is Protein NrdI of Streptococcus pyogenes serotype M2 (strain MGAS10270).